Here is a 205-residue protein sequence, read N- to C-terminus: Regulator of G-protein signaling 4 (205 aa).

3 S-palmitoyl cysteine lipidation sites follow: Cys2, Cys12, and Cys95. In terms of domain architecture, RGS spans 62-178 (SLENLINHEC…LKSRFYLDLT (117 aa)).

Either Cys-2 or Cys-12 or both are palmitoylated. In terms of processing, phosphorylated by cyclic GMP-dependent protein kinase.

In terms of biological role, inhibits signal transduction by increasing the GTPase activity of G protein alpha subunits thereby driving them into their inactive GDP-bound form. Activity on G(z)-alpha is inhibited by phosphorylation of the G-protein. Activity on G(z)-alpha and G(i)-alpha-1 is inhibited by palmitoylation of the G-protein. The polypeptide is Regulator of G-protein signaling 4 (Rgs4) (Rattus norvegicus (Rat)).